Reading from the N-terminus, the 307-residue chain is MAGTSAESEAGQDGMEPVKPLEAELLVVTGMSGAGRSTAADALEDHGWYVVENLPPQMLGTLAELVSHAPQSIPRLAVVIDVRSKGLFADIRAALGALAASGVTFRVLFLDASDNVLVRRFEQGRRPHPLQGGGRILDGIAAERELLQELRDSSDVVLDTSGYNVHGLATAITELFSETGPVALRLNVMSFGFKYGLPVDSNYVADVRFIPNPHWVPQLRPHTGLDKDVSDYVLEAEGVKNFVDRYVMALEPVLDGYRRENKHYATIAVGCTGGKHRSVAVAVELSKKLAQYPRVTVTTTHRDLGRE.

30–37 (GMSGAGRS) contributes to the ATP binding site. Residue 81-84 (DVRS) participates in GTP binding.

It belongs to the RapZ-like family.

Displays ATPase and GTPase activities. The protein is Nucleotide-binding protein Achl_1824 of Pseudarthrobacter chlorophenolicus (strain ATCC 700700 / DSM 12829 / CIP 107037 / JCM 12360 / KCTC 9906 / NCIMB 13794 / A6) (Arthrobacter chlorophenolicus).